The primary structure comprises 562 residues: Oxygen-dependent choline dehydrogenase (562 aa).

An FAD-binding site is contributed by 4–33 (DYIIIGAGSAGNVLATRLTEDPNTSVLLLE). Residue H473 is the Proton acceptor of the active site.

This sequence belongs to the GMC oxidoreductase family. FAD is required as a cofactor.

Its subcellular location is the cell membrane. The enzyme catalyses choline + A = betaine aldehyde + AH2. The catalysed reaction is betaine aldehyde + NAD(+) + H2O = glycine betaine + NADH + 2 H(+). It participates in amine and polyamine biosynthesis; betaine biosynthesis via choline pathway; betaine aldehyde from choline (cytochrome c reductase route): step 1/1. Involved in the biosynthesis of the osmoprotectant glycine betaine. Catalyzes the oxidation of choline to betaine aldehyde and betaine aldehyde to glycine betaine at the same rate. The chain is Oxygen-dependent choline dehydrogenase from Escherichia coli O157:H7.